A 70-amino-acid polypeptide reads, in one-letter code: Conotoxin Im11.11 (70 aa).

The first 25 residues, 1 to 25, serve as a signal peptide directing secretion; it reads MFRLTSVGCILLVIAFLNLVGLTNA. 4 disulfide bridges follow: Cys26–Cys40, Cys33–Cys45, Cys39–Cys49, and Cys44–Cys53. Proline amide is present on Pro56. Residues 60–70 constitute a propeptide that is removed on maturation; the sequence is TRLQGFFKHRR.

This sequence belongs to the conotoxin I2 superfamily. Expressed by the venom duct.

It localises to the secreted. Probable neurotoxin. In Conus imperialis (Imperial cone), this protein is Conotoxin Im11.11.